The primary structure comprises 252 residues: Imidazole glycerol phosphate synthase subunit HisF (252 aa).

Catalysis depends on residues Asp11 and Asp130.

It belongs to the HisA/HisF family. In terms of assembly, heterodimer of HisH and HisF.

The protein resides in the cytoplasm. The enzyme catalyses 5-[(5-phospho-1-deoxy-D-ribulos-1-ylimino)methylamino]-1-(5-phospho-beta-D-ribosyl)imidazole-4-carboxamide + L-glutamine = D-erythro-1-(imidazol-4-yl)glycerol 3-phosphate + 5-amino-1-(5-phospho-beta-D-ribosyl)imidazole-4-carboxamide + L-glutamate + H(+). It participates in amino-acid biosynthesis; L-histidine biosynthesis; L-histidine from 5-phospho-alpha-D-ribose 1-diphosphate: step 5/9. Its function is as follows. IGPS catalyzes the conversion of PRFAR and glutamine to IGP, AICAR and glutamate. The HisF subunit catalyzes the cyclization activity that produces IGP and AICAR from PRFAR using the ammonia provided by the HisH subunit. This Petrotoga mobilis (strain DSM 10674 / SJ95) protein is Imidazole glycerol phosphate synthase subunit HisF.